The following is a 100-amino-acid chain: Small ubiquitin-related modifier 1 (100 aa).

Residues 1 to 12 show a composition bias toward basic and acidic residues; sequence MSAAGEEDKKPA. A disordered region spans residues 1–23; sequence MSAAGEEDKKPAGGEGGGAHINL. Residues 19 to 96 form the Ubiquitin-like domain; that stretch reads AHINLKVKGQ…IDAMLHQTGG (78 aa). G96 is covalently cross-linked (Glycyl lysine isopeptide (Gly-Lys) (interchain with K-? in acceptor proteins)).

Belongs to the ubiquitin family. SUMO subfamily. As to quaternary structure, interacts with SAE2, SCE1 and SIZ1. Covalently attached to a number of proteins.

The protein localises to the nucleus. Its subcellular location is the cytoplasm. Its function is as follows. Ubiquitin-like protein which can be covalently attached to target lysines as a monomer. Does not seem to be involved in protein degradation and may function as an antagonist of ubiquitin in the degradation process. This chain is Small ubiquitin-related modifier 1 (SUMO1), found in Oryza sativa subsp. japonica (Rice).